Consider the following 489-residue polypeptide: Lysine-specific permease LysP (489 aa).

Topologically, residues 2-22 are cytoplasmic; it reads VSETKTTEAPGLRRELKARHL. Residues 23–43 traverse the membrane as a helical segment; it reads TMIAIGGSIGTGLFVASGATI. The Periplasmic segment spans residues 44–45; that stretch reads SQ. The helical transmembrane segment at 46-66 threads the bilayer; that stretch reads AGPGGALLSYMLIGLMVYFLM. The Cytoplasmic segment spans residues 67-105; the sequence is TSLGELAAYMPVSGSFATYGQNYVEEGFGFALGWNYWYN. A helical transmembrane segment spans residues 106–126; it reads WAVTIAVDLVAAQLVMSWWFP. Residues 127–128 lie on the Periplasmic side of the membrane; that stretch reads DT. A helical transmembrane segment spans residues 129-149; the sequence is PGWIWSALFLGVIFLLNYISV. Over 150–161 the chain is Cytoplasmic; sequence RGFGEAEYWFSL. Residues 162-182 form a helical membrane-spanning segment; that stretch reads IKVTTVIVFIIVGVLMIIGIF. The Periplasmic portion of the chain corresponds to 183-197; sequence KGAQPAGWSNWTIGE. A helical transmembrane segment spans residues 198–218; the sequence is APFAGGFAAMIGVAMIVGFSF. Residues 219 to 244 lie on the Cytoplasmic side of the membrane; that stretch reads QGTELIGIAAGESEDPAKNIPRAVRQ. A helical membrane pass occupies residues 245–265; sequence VFWRILLFYVFAILIISLIIP. At 266-290 the chain is on the periplasmic side; it reads YTDPSLLRNDVKDISVSPFTLVFQH. The chain crosses the membrane as a helical span at residues 291–311; the sequence is AGLLSAAAVMNAVILTAVLSA. Over 312 to 346 the chain is Cytoplasmic; it reads GNSGMYASTRMLYTLACDGKAPRIFAKLSRGGVPR. Residues 347 to 367 form a helical membrane-spanning segment; sequence NALYATTVIAGLCFLTSMFGN. The Periplasmic portion of the chain corresponds to 368 to 370; it reads QTV. The helical transmembrane segment at 371 to 391 threads the bilayer; it reads YLWLLNTSGMTGFIAWLGIAI. Topologically, residues 392–413 are cytoplasmic; the sequence is SHYRFRRGYVLQGHDINDLPYR. The chain crosses the membrane as a helical span at residues 414 to 434; that stretch reads SGFFPLGPIFAFILCLIITLG. The Periplasmic segment spans residues 435–446; the sequence is QNYEAFLKDTID. A helical membrane pass occupies residues 447-467; it reads WGGVAATYIGIPLFLIIWFGY. The Cytoplasmic segment spans residues 468–489; it reads KLIKGTHFVRYSEMKFPQNDKK.

Belongs to the amino acid-polyamine-organocation (APC) superfamily. Amino acid transporter (AAT) (TC 2.A.3.1) family. Interacts strongly with the transcriptional activator CadC in the absence of lysine or at low lysine concentrations. Interaction is markedly attenuated under increasing lysine levels. Concomitant pH-dependent protonation of periplasmic amino acids in both proteins dissolves their electrostatic connections resulting in further destabilization of the CadC/LysP interaction. Low pH promotes oligomerization of LysP.

The protein resides in the cell inner membrane. The catalysed reaction is L-lysine(out) + H(+)(out) = L-lysine(in) + H(+)(in). Permease involved in lysine uptake. In addition, functions as a lysine sensor that mediates the lysine-dependent regulation of the transcriptional activator CadC. In the absence of lysine, or at low lysine concentrations, LysP inhibits CadC by an interaction with the transmembrane domain of CadC. In the presence of lysine, LysP loses its ability to interact with and inhibit CadC, and acts as a lysine permease. The protein is Lysine-specific permease LysP of Escherichia coli (strain K12).